We begin with the raw amino-acid sequence, 320 residues long: Cytochrome f (320 aa).

Residues 1–35 (MQTRNTLSWIREEITRSISVSLMIYIITWASISSA) form the signal peptide. Positions 36, 56, 59, and 60 each coordinate heme. Residues 286 to 306 (VQGLLFFLGSVVLAQIFLVLK) traverse the membrane as a helical segment.

This sequence belongs to the cytochrome f family. As to quaternary structure, the 4 large subunits of the cytochrome b6-f complex are cytochrome b6, subunit IV (17 kDa polypeptide, petD), cytochrome f and the Rieske protein, while the 4 small subunits are PetG, PetL, PetM and PetN. The complex functions as a dimer. Heme is required as a cofactor.

The protein resides in the plastid. The protein localises to the chloroplast thylakoid membrane. Functionally, component of the cytochrome b6-f complex, which mediates electron transfer between photosystem II (PSII) and photosystem I (PSI), cyclic electron flow around PSI, and state transitions. The polypeptide is Cytochrome f (Olimarabidopsis pumila (Dwarf rocket)).